Consider the following 542-residue polypeptide: CTP synthase (542 aa).

Residues 1-265 form an amidoligase domain region; the sequence is MARYVFITGG…DSEVLSAFGM (265 aa). Residue Ser-13 participates in CTP binding. A UTP-binding site is contributed by Ser-13. 14–19 contacts ATP; the sequence is SLGKGI. Tyr-54 is a binding site for L-glutamine. Asp-71 provides a ligand contact to ATP. Positions 71 and 139 each coordinate Mg(2+). CTP is bound by residues 146 to 148, 186 to 191, and Lys-222; these read DIE and KTKPTQ. UTP-binding positions include 186–191 and Lys-222; that span reads KTKPTQ. Residues 291-541 form the Glutamine amidotransferase type-1 domain; the sequence is TIAVVGKYTG…IEATVEQSRL (251 aa). Ala-353 provides a ligand contact to L-glutamine. Residue Cys-380 is the Nucleophile; for glutamine hydrolysis of the active site. L-glutamine contacts are provided by residues 381–384, Glu-404, and Arg-469; that span reads FGMQ. Active-site residues include His-514 and Glu-516.

It belongs to the CTP synthase family. As to quaternary structure, homotetramer.

It catalyses the reaction UTP + L-glutamine + ATP + H2O = CTP + L-glutamate + ADP + phosphate + 2 H(+). The enzyme catalyses L-glutamine + H2O = L-glutamate + NH4(+). It carries out the reaction UTP + NH4(+) + ATP = CTP + ADP + phosphate + 2 H(+). Its pathway is pyrimidine metabolism; CTP biosynthesis via de novo pathway; CTP from UDP: step 2/2. With respect to regulation, allosterically activated by GTP, when glutamine is the substrate; GTP has no effect on the reaction when ammonia is the substrate. The allosteric effector GTP functions by stabilizing the protein conformation that binds the tetrahedral intermediate(s) formed during glutamine hydrolysis. Inhibited by the product CTP, via allosteric rather than competitive inhibition. In terms of biological role, catalyzes the ATP-dependent amination of UTP to CTP with either L-glutamine or ammonia as the source of nitrogen. Regulates intracellular CTP levels through interactions with the four ribonucleotide triphosphates. This Bartonella henselae (strain ATCC 49882 / DSM 28221 / CCUG 30454 / Houston 1) (Rochalimaea henselae) protein is CTP synthase.